Consider the following 467-residue polypeptide: Acid phosphatase PHO12 (467 aa).

Positions 1 to 17 are cleaved as a signal peptide; it reads MLKSAVYSILAASLVNA. His75 acts as the Nucleophile in catalysis. 5 N-linked (GlcNAc...) asparagine glycosylation sites follow: Asn97, Asn162, Asn192, Asn250, and Asn315. The active-site Proton donor is Asp338. N-linked (GlcNAc...) asparagine glycans are attached at residues Asn356, Asn390, Asn439, Asn445, and Asn461.

The protein belongs to the histidine acid phosphatase family. In terms of processing, glycosylated during secretion across the membrane.

The enzyme catalyses a phosphate monoester + H2O = an alcohol + phosphate. The sequence is that of Acid phosphatase PHO12 (PHO12) from Saccharomyces cerevisiae (strain ATCC 204508 / S288c) (Baker's yeast).